A 1085-amino-acid polypeptide reads, in one-letter code: MSFVHLHVHSPFSFLDGASRLDDLIAEAALHGMPALALTDHNNVSGAVRFQRKAQEAGIQPIQGAELTLEGGYHLTLLATGPKGYANLNRLITAAHLGQEPRATPGAMFALAPGHDRLQPACPLSALSHDTDGLIALSGCRRGEIPSLILRGRLAEAEAAARRYAAWFPGRFYLELHDERLPGEQALNRALRDLGEALGLPLVVTSNVHHRTREEFFVHDLLTCVRTLTRIDQPHPERPLNDQRYLKPPEVMIERFREFPEAVKNTLAIAERCRPVLDLDARLHPEFQTPDGSHPAAYLTHLVYDGAARRYGRITERIRRRLEHELTIITRLGYEDYFLLVWDVVRFARERGIRCAGRGSAADSAVAYCLFITDVDAIERGLLFERFMSLERAQKPDIDIDFDARRRDEVAAYVYRKYGADHVASVCTYNTFQARSAVRDLGKAMGFQEADLDYLAKRIPWHAGADEILTVMARYPELRQSGIPWHKFEQLVQAAERVARFPRFIGTHLGGLVISRRPLLEVTPLQMAAKGQVVCQFDKEYVEDLGLVKLDLLSLRTFTAVDDAVRAIGDIDYEQIPHGDAATYEMLGVGESIGVFQLESPAQRALQARLKPDRFEDIVASVAIIRPGPIKGNMVEPFLARRHGKEEVTYLHPKLKPILEKTYGVVLFQEQVIEIATAVAGFTPGEADQLRRVMTHARNREDMEAIGRLFRQKAAAAGVDPAVADTIFSYIQGYASYGFCEAHAAAFANTAYKTAYLVRHYPAEYFAALMSAQPMGYYPINTLAVEARRRGVGLLPVDINRSEEAFTVEEWSREAWEAFWGMEPFAPEYPATGKAIRIGLRAVKGVGEPAAAAILAARDGGEFRSLADLVRRTGGAVPRGPLEALVLAGAFDRLHSNRRAALWQVAHLLEAERIRQERGAGQAGLLDGDAPGLGAQAAEALEAASPQGTPAIADFGAAERYLKEYELTGLMVRTHFMRFVRERLAREGYLTAQEVRQRRAGELVKVAGLPVCPHRPPTRSGKIVVFLSLEDETGLIDLTIFEDVYQRYGHLIFTDPRPPLAALGRVDRRGGHVSITVNRLRLLDT.

This sequence belongs to the DNA polymerase type-C family. DnaE2 subfamily.

The protein resides in the cytoplasm. The enzyme catalyses DNA(n) + a 2'-deoxyribonucleoside 5'-triphosphate = DNA(n+1) + diphosphate. Its function is as follows. DNA polymerase involved in damage-induced mutagenesis and translesion synthesis (TLS). It is not the major replicative DNA polymerase. This chain is Error-prone DNA polymerase, found in Symbiobacterium thermophilum (strain DSM 24528 / JCM 14929 / IAM 14863 / T).